A 245-amino-acid chain; its full sequence is NADH-quinone oxidoreductase subunit C (245 aa).

Over residues 1–10 (MSAPQDRTDD) the composition is skewed to basic and acidic residues. Disordered stretches follow at residues 1-54 (MSAP…GYGG) and 216-245 (PQRK…RSYQ). The span at 11-28 (GGVPVPVTPAGATGGAPA) shows a compositional bias: low complexity. The segment covering 39 to 54 (GMFGDQGTGDVSGYGG) has biased composition (gly residues).

The protein belongs to the complex I 30 kDa subunit family. In terms of assembly, NDH-1 is composed of 14 different subunits. Subunits NuoB, C, D, E, F, and G constitute the peripheral sector of the complex.

It localises to the cell membrane. The enzyme catalyses a quinone + NADH + 5 H(+)(in) = a quinol + NAD(+) + 4 H(+)(out). In terms of biological role, NDH-1 shuttles electrons from NADH, via FMN and iron-sulfur (Fe-S) centers, to quinones in the respiratory chain. The immediate electron acceptor for the enzyme in this species is believed to be a menaquinone. Couples the redox reaction to proton translocation (for every two electrons transferred, four hydrogen ions are translocated across the cytoplasmic membrane), and thus conserves the redox energy in a proton gradient. This chain is NADH-quinone oxidoreductase subunit C, found in Salinispora tropica (strain ATCC BAA-916 / DSM 44818 / JCM 13857 / NBRC 105044 / CNB-440).